The following is a 223-amino-acid chain: Phosphoribosylformylglycinamidine synthase subunit PurQ (223 aa).

Residues F3 to V223 enclose the Glutamine amidotransferase type-1 domain. C85 serves as the catalytic Nucleophile. Residues H193 and E195 contribute to the active site.

As to quaternary structure, part of the FGAM synthase complex composed of 1 PurL, 1 PurQ and 2 PurS subunits.

It is found in the cytoplasm. The catalysed reaction is N(2)-formyl-N(1)-(5-phospho-beta-D-ribosyl)glycinamide + L-glutamine + ATP + H2O = 2-formamido-N(1)-(5-O-phospho-beta-D-ribosyl)acetamidine + L-glutamate + ADP + phosphate + H(+). The enzyme catalyses L-glutamine + H2O = L-glutamate + NH4(+). It participates in purine metabolism; IMP biosynthesis via de novo pathway; 5-amino-1-(5-phospho-D-ribosyl)imidazole from N(2)-formyl-N(1)-(5-phospho-D-ribosyl)glycinamide: step 1/2. In terms of biological role, part of the phosphoribosylformylglycinamidine synthase complex involved in the purines biosynthetic pathway. Catalyzes the ATP-dependent conversion of formylglycinamide ribonucleotide (FGAR) and glutamine to yield formylglycinamidine ribonucleotide (FGAM) and glutamate. The FGAM synthase complex is composed of three subunits. PurQ produces an ammonia molecule by converting glutamine to glutamate. PurL transfers the ammonia molecule to FGAR to form FGAM in an ATP-dependent manner. PurS interacts with PurQ and PurL and is thought to assist in the transfer of the ammonia molecule from PurQ to PurL. This is Phosphoribosylformylglycinamidine synthase subunit PurQ from Staphylococcus haemolyticus (strain JCSC1435).